The chain runs to 522 residues: F-box only protein 7 (522 aa).

Positions 1 to 88 are ubiquitin-like; it reads MRLRVRLLKR…QDDIPAPNIP (88 aa). The segment at 85-144 is disordered; that stretch reads PNIPSSTDSEHSSLQNNEQPSLATSSNQTSMQDEQPSDSFQGQAAQSGVWNDDSMLGPSQ. The span at 87–133 shows a compositional bias: polar residues; it reads IPSSTDSEHSSLQNNEQPSLATSSNQTSMQDEQPSDSFQGQAAQSGV. The important for interaction with PINK1 stretch occupies residues 92–129; it reads DSEHSSLQNNEQPSLATSSNQTSMQDEQPSDSFQGQAA. The interval 129–169 is important for interaction with CDK6; sequence AQSGVWNDDSMLGPSQNFEAESIQDNAHMAEGTGFYPSEPM. An important for dimerization and interaction with PSMF1 region spans residues 180–324; it reads PHSLETLYQS…PLLAFTRQAL (145 aa). Residues 329–375 enclose the F-box domain; it reads VFGLVVLPLELKLRIFRLLDVRSVLSLSAVCRDLFTASNDPLLWRFL. The segment at 381 to 522 is important for interaction with CDK6; sequence RDNTVRVQDT…RPTDGRLSFM (142 aa). Residues R432 and R451 each carry the omega-N-methylarginine modification. The short motif at 481-484 is the RFDP motif element; that stretch reads RFDP. The interval 483 to 522 is disordered; that stretch reads DPVGPLPGPNPILPGRGGPNDRFPFRPSRGRPTDGRLSFM. Asymmetric dimethylarginine is present on R518.

As to quaternary structure, part of the SCF (SKP1-CUL1-F-box) E3 ubiquitin-protein ligase complex SCF(FBXO7) formed of CUL1, SKP1, RBX1 and FBXO7. Interacts via its C-terminal proline-rich region with DLGAP5. Interacts with BIRC2. Interacts with CDK6 and promotes its interaction with D-type cyclin. Interacts with PSMF1. In terms of assembly, interacts (via the N-terminal Ubl domain) with PRKN. Interact (via N-terminal region) with PINK1. Interact (via N-terminal region) with PINK1.

It localises to the cytoplasm. The protein resides in the nucleus. It is found in the mitochondrion. The protein localises to the cytosol. Its pathway is protein modification; protein ubiquitination. Its function is as follows. Substrate recognition component of a SCF (SKP1-CUL1-F-box protein) E3 ubiquitin-protein ligase complex which mediates the ubiquitination and subsequent proteasomal degradation of target proteins and plays a role in several biological processes such as cell cycle, cell proliferation, or maintenance of chromosome stability. Recognizes and ubiquitinates BIRC2 and the cell cycle regulator DLGAP5. Plays a role downstream of PINK1 in the clearance of damaged mitochondria via selective autophagy (mitophagy) by targeting PRKN to dysfunctional depolarized mitochondria. Promotes MFN1 ubiquitination. Mediates the ubiquitination and proteasomal degradation of UXT isoform 2, thereby impairing the NF-kappa-B signaling pathway. Inhibits NF-kappa-B pathway also by promoting the ubiquitination of TRAF2. Affects the assembly state and activity of the proteasome in the cells including neurons by ubiquitinating the proteasomal subunit PSMA2 via 'Lys-63'-linked polyubiquitin chains. Promotes 'Lys-48'-linked polyubiquitination SIRT7, leading to the hydrogen peroxide-induced cell death. The chain is F-box only protein 7 (FBXO7) from Homo sapiens (Human).